Here is a 781-residue protein sequence, read N- to C-terminus: Molybdenum cofactor sulfurase (781 aa).

Lys246 is subject to N6-(pyridoxal phosphate)lysine. Cys413 is an active-site residue. Positions 635–781 (LRLLRQSGQR…MTCGDVVLVE (147 aa)) constitute an MOSC domain. Position 734 is a phosphoserine (Ser734).

The protein belongs to the class-V pyridoxal-phosphate-dependent aminotransferase family. MOCOS subfamily. Requires pyridoxal 5'-phosphate as cofactor.

It carries out the reaction Mo-molybdopterin + L-cysteine + AH2 = thio-Mo-molybdopterin + L-alanine + A + H2O. The protein operates within cofactor biosynthesis; molybdopterin biosynthesis. Its function is as follows. Sulfurates the molybdenum cofactor. Sulfation of molybdenum is essential for xanthine dehydrogenase (XDH) and aldehyde oxidase (ADO) enzymes in which molybdenum cofactor is liganded by 1 oxygen and 1 sulfur atom in active form. In Drosophila melanogaster (Fruit fly), this protein is Molybdenum cofactor sulfurase.